Reading from the N-terminus, the 802-residue chain is Phenylalanine--tRNA ligase beta subunit (802 aa).

The tRNA-binding domain maps to 39–150; sequence AKALKPFTIA…ADAPIGAAYA (112 aa). The B5 domain maps to 400–475; the sequence is GDDRVIDFPV…RIYGVDKVPM (76 aa). The Mg(2+) site is built by D453, D459, E462, and E463. Residues 708–801 form the FDX-ACB domain; that stretch reads SAFQPVSRDF…VTKKTGGTLR (94 aa).

It belongs to the phenylalanyl-tRNA synthetase beta subunit family. Type 1 subfamily. Tetramer of two alpha and two beta subunits. Mg(2+) is required as a cofactor.

Its subcellular location is the cytoplasm. It catalyses the reaction tRNA(Phe) + L-phenylalanine + ATP = L-phenylalanyl-tRNA(Phe) + AMP + diphosphate + H(+). This Bradyrhizobium diazoefficiens (strain JCM 10833 / BCRC 13528 / IAM 13628 / NBRC 14792 / USDA 110) protein is Phenylalanine--tRNA ligase beta subunit.